A 444-amino-acid polypeptide reads, in one-letter code: Maintenance of mitochondrial morphology protein 1 (444 aa).

Residues 1–110 lie on the Lumenal side of the membrane; the sequence is MNNLDNLAGN…SFSGWSFIEG (110 aa). The chain crosses the membrane as a helical span at residues 111–131; that stretch reads FIIGQFSVIIVLIFFIKFFVF. The Cytoplasmic segment spans residues 132–444; sequence SDGSSSNSSN…TDDVPLSKAE (313 aa). An SMP-LTD domain is found at 207 to 419; it reads PSESLDWFNV…EPRFQCIRLP (213 aa).

This sequence belongs to the MMM1 family. In terms of assembly, homodimer. Component of the ER-mitochondria encounter structure (ERMES) or MDM complex, composed of MMM1, MDM10, MDM12 and MDM34. An MMM1 homodimer associates with one molecule of MDM12 on each side in a pairwise head-to-tail manner, and the SMP-LTD domains of MMM1 and MDM12 generate a continuous hydrophobic tunnel for phospholipid trafficking.

The protein resides in the endoplasmic reticulum membrane. Functionally, component of the ERMES/MDM complex, which serves as a molecular tether to connect the endoplasmic reticulum (ER) and mitochondria. Components of this complex are involved in the control of mitochondrial shape and protein biogenesis, and function in nonvesicular lipid trafficking between the ER and mitochondria. The MDM12-MMM1 subcomplex functions in the major beta-barrel assembly pathway that is responsible for biogenesis of all outer membrane beta-barrel proteins, and acts in a late step after the SAM complex. The MDM10-MDM12-MMM1 subcomplex further acts in the TOM40-specific pathway after the action of the MDM12-MMM1 complex. Essential for establishing and maintaining the structure of mitochondria and maintenance of mtDNA nucleoids. This Vanderwaltozyma polyspora (strain ATCC 22028 / DSM 70294 / BCRC 21397 / CBS 2163 / NBRC 10782 / NRRL Y-8283 / UCD 57-17) (Kluyveromyces polysporus) protein is Maintenance of mitochondrial morphology protein 1.